Reading from the N-terminus, the 285-residue chain is Protease HtpX homolog (285 aa).

2 helical membrane-spanning segments follow: residues 7 to 27 (TAMLMAGITALFIVIGGMIGG) and 30 to 50 (GMTIALLFALAMNFFSYWFSD). His131 provides a ligand contact to Zn(2+). Residue Glu132 is part of the active site. A Zn(2+)-binding site is contributed by His135. The next 2 helical transmembrane spans lie at 146 to 166 (ITATMAGAISALANFAMFFGG) and 177 to 197 (IAGIAVALLAPIAGALIQMAI). Glu202 provides a ligand contact to Zn(2+).

The protein belongs to the peptidase M48B family. Zn(2+) serves as cofactor.

The protein resides in the cell inner membrane. The sequence is that of Protease HtpX homolog from Burkholderia ambifaria (strain MC40-6).